Here is a 135-residue protein sequence, read N- to C-terminus: uncharacterized protein (135 aa).

The interval 1-75 (MAAATETGQA…PPPRPPQRRC (75 aa)) is disordered.

This is an uncharacterized protein from Homo sapiens (Human).